A 243-amino-acid chain; its full sequence is UPF0688 protein C1orf174 (243 aa).

Disordered regions lie at residues 78-100 (NDSASLPKVTPETPCENEFAEGS) and 132-243 (LAKT…DAEM). Residues 145 to 157 (SAGSGAEESNSSS) are compositionally biased toward low complexity. Serine 148 and serine 189 each carry phosphoserine. Over residues 233 to 243 (DDDDDDDDAEM) the composition is skewed to acidic residues.

Belongs to the UPF0688 family.

It is found in the nucleus. This Homo sapiens (Human) protein is UPF0688 protein C1orf174 (C1orf174).